The chain runs to 416 residues: E3 ubiquitin-protein ligase RNFT1 (416 aa).

A compositionally biased stretch (polar residues) spans 27–45; sequence QSSSGHTHHQPGSNDSPSV. Disordered stretches follow at residues 27–50 and 63–116; these read QSSS…MSLP and GDVT…ADSR. A compositionally biased stretch (basic residues) spans 77 to 86; it reads GARSSSRRVR. Transmembrane regions (helical) follow at residues 146–166, 184–204, 214–234, 237–257, 265–287, and 302–322; these read LVVQ…TFLY, LQCL…YYTF, VFMN…VVGI, FIGK…PSFV, YWYM…PVWF, and WHFG…IIFG. Residues 349-400 are required for ubiquitin ligase activity and for protection against ER stress-induced cell death; that stretch reads CSEVDGMCAICQAEFIKPIVLVCQHVFCEECISLWFNKEKTCPLCRTVISNQ. The RING-type zinc finger occupies 356-394; that stretch reads CAICQAEFIKPIVLVCQHVFCEECISLWFNKEKTCPLCR.

The protein localises to the endoplasmic reticulum membrane. It carries out the reaction S-ubiquitinyl-[E2 ubiquitin-conjugating enzyme]-L-cysteine + [acceptor protein]-L-lysine = [E2 ubiquitin-conjugating enzyme]-L-cysteine + N(6)-ubiquitinyl-[acceptor protein]-L-lysine.. It functions in the pathway protein modification; protein ubiquitination. In terms of biological role, E3 ubiquitin-protein ligase that acts in the endoplasmic reticulum (ER)-associated degradation (ERAD) pathway, which targets misfolded proteins that accumulate in the endoplasmic reticulum (ER) for ubiquitination and subsequent proteasome-mediated degradation. Protects cells from ER stress-induced apoptosis. This is E3 ubiquitin-protein ligase RNFT1 (rnft1) from Xenopus tropicalis (Western clawed frog).